A 481-amino-acid polypeptide reads, in one-letter code: Delta(14)-sterol reductase ERG24B (481 aa).

Transmembrane regions (helical) follow at residues 11–31 (FGGP…MQVL), 80–100 (LFAY…QIVL), 125–145 (LTGC…WTWI), 149–169 (YIQL…WTYL), 244–264 (TYGF…YYVL), 279–299 (ITSD…VPFL), 313–333 (HLGP…LYIF), and 427–447 (AAPW…FLLI).

The protein belongs to the ERG4/ERG24 family.

The protein localises to the endoplasmic reticulum membrane. The enzyme catalyses 4,4-dimethyl-5alpha-cholesta-8,24-dien-3beta-ol + NADP(+) = 4,4-dimethyl-5alpha-cholesta-8,14,24-trien-3beta-ol + NADPH + H(+). The protein operates within steroid metabolism; ergosterol biosynthesis. Delta(14)-sterol reductase; part of the third module of ergosterol biosynthesis pathway that includes the late steps of the pathway. Catalyzes the reduction of the C14=C15 double bond within 4,4,24-trimethyl ergosta-8,14,24(28)-trienolto produce 4,4-dimethylfecosterol. The third module or late pathway involves the ergosterol synthesis itself through consecutive reactions that mainly occur in the endoplasmic reticulum (ER) membrane. Firstly, the squalene synthase ERG9 catalyzes the condensation of 2 farnesyl pyrophosphate moieties to form squalene, which is the precursor of all steroids. Squalene synthase is crucial for balancing the incorporation of farnesyl diphosphate (FPP) into sterol and nonsterol isoprene synthesis. Secondly, squalene is converted into lanosterol by the consecutive action of the squalene epoxidase ERG1 and the lanosterol synthase ERG7. Then, the delta(24)-sterol C-methyltransferase ERG6 methylates lanosterol at C-24 to produce eburicol. Eburicol is the substrate of the sterol 14-alpha demethylase encoded by CYP51A, CYP51B and CYP51C, to yield 4,4,24-trimethyl ergosta-8,14,24(28)-trienol. CYP51B encodes the enzyme primarily responsible for sterol 14-alpha-demethylation, and plays an essential role in ascospore formation. CYP51A encodes an additional sterol 14-alpha-demethylase, induced on ergosterol depletion and responsible for the intrinsic variation in azole sensitivity. The third CYP51 isoform, CYP51C, does not encode a sterol 14-alpha-demethylase, but is required for full virulence on host wheat ears. The C-14 reductase ERG24 then reduces the C14=C15 double bond which leads to 4,4-dimethylfecosterol. A sequence of further demethylations at C-4, involving the C-4 demethylation complex containing the C-4 methylsterol oxidases ERG25, the sterol-4-alpha-carboxylate 3-dehydrogenase ERG26 and the 3-keto-steroid reductase ERG27, leads to the production of fecosterol via 4-methylfecosterol. ERG28 has a role as a scaffold to help anchor ERG25, ERG26 and ERG27 to the endoplasmic reticulum. The C-8 sterol isomerase ERG2 then catalyzes the reaction which results in unsaturation at C-7 in the B ring of sterols and thus converts fecosterol to episterol. The sterol-C5-desaturases ERG3A and ERG3BB then catalyze the introduction of a C-5 double bond in the B ring to produce 5-dehydroepisterol. The C-22 sterol desaturases ERG5A and ERG5B further convert 5-dehydroepisterol into ergosta-5,7,22,24(28)-tetraen-3beta-ol by forming the C-22(23) double bond in the sterol side chain. Finally, ergosta-5,7,22,24(28)-tetraen-3beta-ol is substrate of the C-24(28) sterol reductase ERG4 to produce ergosterol. In Gibberella zeae (strain ATCC MYA-4620 / CBS 123657 / FGSC 9075 / NRRL 31084 / PH-1) (Wheat head blight fungus), this protein is Delta(14)-sterol reductase ERG24B.